A 149-amino-acid polypeptide reads, in one-letter code: Protein Rv2250A (149 aa).

This is Protein Rv2250A from Mycobacterium tuberculosis (strain ATCC 25618 / H37Rv).